A 367-amino-acid chain; its full sequence is Serine/threonine-protein kinase Sgk2 (367 aa).

The tract at residues 1–28 (MASSPVGVPSPQPSRANGNINLGPSANP) is disordered. S10 carries the post-translational modification Phosphoserine. Over residues 15–28 (RANGNINLGPSANP) the composition is skewed to polar residues. The region spanning 35–292 (FDFLKVIGKG…FLDIKNHMFF (258 aa)) is the Protein kinase domain. ATP contacts are provided by residues 41 to 49 (IGKGNYGKV) and K64. Positions 68–77 (KKSILKNKEQ) match the Nuclear localization signal motif. The active-site Proton acceptor is D159. T193 bears the Phosphothreonine; by PDPK1 mark. Positions 293–367 (SPINWDDLYH…AQDDDDILDS (75 aa)) constitute an AGC-kinase C-terminal domain. Residues S334 and S356 each carry the phosphoserine modification. Position 357 is a phosphotyrosine (Y357).

This sequence belongs to the protein kinase superfamily. AGC Ser/Thr protein kinase family. In terms of processing, activated by phosphorylation on Ser-356 by an unknown kinase (may be mTORC2 but not confirmed), transforming it into a substrate for PDPK1 which then phosphorylates it on Thr-193. As to expression, expressed in the proximal tubule and thick ascending limb of the loop of Henle (TALH).

It localises to the cytoplasm. Its subcellular location is the nucleus. It carries out the reaction L-seryl-[protein] + ATP = O-phospho-L-seryl-[protein] + ADP + H(+). The enzyme catalyses L-threonyl-[protein] + ATP = O-phospho-L-threonyl-[protein] + ADP + H(+). Its activity is regulated as follows. Two specific sites, one in the kinase domain (Thr-193) and the other in the C-terminal regulatory region (Ser-356), need to be phosphorylated for its full activation. Its function is as follows. Serine/threonine-protein kinase which is involved in the regulation of a wide variety of ion channels, membrane transporters, cell growth, survival and proliferation. Up-regulates Na(+) channels: SCNN1A/ENAC, K(+) channels: KCNA3/Kv1.3, KCNE1 and KCNQ1, amino acid transporter: SLC6A19, glutamate transporter: SLC1A6/EAAT4, glutamate receptors: GRIA1/GLUR1 and GRIK2/GLUR6, Na(+)/H(+) exchanger: SLC9A3/NHE3, and the Na(+)/K(+) ATPase. The protein is Serine/threonine-protein kinase Sgk2 (Sgk2) of Rattus norvegicus (Rat).